Here is a 424-residue protein sequence, read N- to C-terminus: GTPase HflX (424 aa).

Residues 194–364 form the Hflx-type G domain; it reads YTVALTGYTG…AVVEMLPEKV (171 aa). Residues 200-207, 225-229, 246-249, 314-317, and 342-344 contribute to the GTP site; these read GYTGAGKT, FATLS, DTIG, NKID, and SAA. 2 residues coordinate Mg(2+): Thr207 and Thr227.

Belongs to the TRAFAC class OBG-HflX-like GTPase superfamily. HflX GTPase family. Monomer. Associates with the 50S ribosomal subunit. Mg(2+) is required as a cofactor.

Its subcellular location is the cytoplasm. GTPase that associates with the 50S ribosomal subunit and may have a role during protein synthesis or ribosome biogenesis. In Thermofilum pendens (strain DSM 2475 / Hrk 5), this protein is GTPase HflX.